The chain runs to 2598 residues: Partially reducing polyketide synthase men1 (2598 aa).

A Ketosynthase family 3 (KS3) domain is found at 7–435; it reads SQSIAIVGLS…GSNAHAILDD (429 aa). Catalysis depends on for beta-ketoacyl synthase activity residues C181, H316, and H358. Basic residues predominate over residues 450–459; sequence GKSHHHHHQH. Disordered regions lie at residues 450–490 and 537–557; these read GKSH…NGTT and AEKQ…DPEK. The segment covering 474 to 490 has biased composition (low complexity); the sequence is VNGTSEVNGTSGVNGTT. Residues 611–915 enclose the Malonyl-CoA:ACP transacylase (MAT) domain; sequence YVFTGQGAQW…RGPVTQILQS (305 aa). The interval 1008 to 1151 is N-terminal hotdog fold; sequence LGLIGAPMPN…GSVAVEFGAL (144 aa). A PKS/mFAS DH domain is found at 1008 to 1325; that stretch reads LGLIGAPMPN…CVEMPSASGM (318 aa). The interval 1009-1323 is dehydratase (DH) domain; that stretch reads GLIGAPMPNF…LVCVEMPSAS (315 aa). Residues 1169–1325 form a C-terminal hotdog fold region; that stretch reads TISQEVDVFY…CVEMPSASGM (157 aa). Positions 1886 to 2197 constitute an Enoyl reductase (ER) domain; that stretch reads GMLNTLCFEI…ARSRQDKIVI (312 aa). One can recognise a Ketoreductase (KR) domain in the interval 2222–2399; the sequence is TYLIAGGLGG…AATIDLGIVK (178 aa). The 78-residue stretch at 2510 to 2587 folds into the Carrier domain; the sequence is EAARLVSAAV…AFASDLAKKG (78 aa). S2547 carries the O-(pantetheine 4'-phosphoryl)serine modification.

The cofactor is pantetheine 4'-phosphate.

The protein operates within secondary metabolite biosynthesis. Functionally, partially reducing polyketide synthase; part of the gene cluster that mediates the biosynthesis of menisporopsin A, a bioactive macrocyclic polylactone. The biosynthesis of menisporopsin A is performed by a reducing (man1) and a non-reducing (men2) polyketide synthase that catalyze the formation of each menisporopsin A subunits, while the esterification and cyclolactonization activities are probably peformed by the unusual thioesterase domain of men2. First, a reduced diketide intermediate, 3-hydroxybutyryl-S-ACP is produced by men1 and transferred to men2; this is followed by a second reduced diketide which is further elongated using 3 units of malonyl-coA to form a reduced pentaketide. The cyclization of this intermediate by the PT domain forms the second subunit, 2,4-dihydroxy-6-(2-hydroxy-n-propyl)benzoyl-S-ACP. The TE domain of men2 then esterifies the secondary hydroxyl group on the side chain of the second subunit with the acyl-TE of the first subunit to form the first ester intermediate. This process occurs iteratively to form a linear tetraester intermediate. The final subunit is formed by a similar process, except that an extra malonyl-CoA is required in an additional elongation step to form a reduced hexaketide intermediate, and the carbonyl group next to the secondary hydroxyl group is reduced by a trans-acting ketoreductase. Again, the PT domain catalyzes cyclization to form the largest subunit, 2,4-dihydroxy-6-(2,4-dihydroxy-n-pentyl) benzoyl-S-ACP. Then the linear pentaester intermediate is formed. In this step, if the intermediate transfer rate is slow, intra- molecular cyclization involving the secondary hydroxyl group of the pentaester intermediate may occur to form menisporopsin B. Alternatively, transfer of the pentaester intermediate to the TE domain would allow cyclolactonization to be catalyzed by the TE to form menisporopsin A. This is Partially reducing polyketide synthase men1 from Menisporopsis theobromae.